We begin with the raw amino-acid sequence, 247 residues long: 1-(5-phosphoribosyl)-5-[(5-phosphoribosylamino)methylideneamino] imidazole-4-carboxamide isomerase (247 aa).

Catalysis depends on aspartate 8, which acts as the Proton acceptor. The Proton donor role is filled by aspartate 130.

The protein belongs to the HisA/HisF family.

The protein resides in the cytoplasm. It carries out the reaction 1-(5-phospho-beta-D-ribosyl)-5-[(5-phospho-beta-D-ribosylamino)methylideneamino]imidazole-4-carboxamide = 5-[(5-phospho-1-deoxy-D-ribulos-1-ylimino)methylamino]-1-(5-phospho-beta-D-ribosyl)imidazole-4-carboxamide. Its pathway is amino-acid biosynthesis; L-histidine biosynthesis; L-histidine from 5-phospho-alpha-D-ribose 1-diphosphate: step 4/9. The polypeptide is 1-(5-phosphoribosyl)-5-[(5-phosphoribosylamino)methylideneamino] imidazole-4-carboxamide isomerase (Stutzerimonas stutzeri (strain A1501) (Pseudomonas stutzeri)).